The chain runs to 629 residues: Chaperone protein HtpG (629 aa).

The interval 1 to 335 (MSEVETSVEK…TADLPLNVSR (335 aa)) is a; substrate-binding. The tract at residues 336–551 (EMIQESPLLA…EQGPDRQLQK (216 aa)) is b. Residues 552-629 (MLQDAGRIEG…SRVFGRALKE (78 aa)) are c.

This sequence belongs to the heat shock protein 90 family. In terms of assembly, homodimer.

It localises to the cytoplasm. Its function is as follows. Molecular chaperone. Has ATPase activity. The polypeptide is Chaperone protein HtpG (Rhizobium meliloti (strain 1021) (Ensifer meliloti)).